The sequence spans 340 residues: Glutamine synthetase (340 aa).

Residues 3 to 82 (IKAEYIWIDG…LCEVLHTDLT (80 aa)) form the GS beta-grasp domain. One can recognise a GS catalytic domain in the interval 88–340 (TRALLRPVAE…CTELARREQI (253 aa)). 4 residues coordinate Mg(2+): Glu-109, Glu-111, Glu-171, and Glu-178. Glu-276 contributes to the L-glutamate binding site.

It belongs to the glutamine synthetase family. As to quaternary structure, homooctamer and homotetramer. Requires Mg(2+) as cofactor.

Its subcellular location is the cytoplasm. The catalysed reaction is L-glutamate + NH4(+) + ATP = L-glutamine + ADP + phosphate + H(+). Functionally, catalyzes the ATP-dependent biosynthesis of glutamine from glutamate and ammonia. This chain is Glutamine synthetase, found in Streptomyces hygroscopicus.